A 587-amino-acid chain; its full sequence is GATA zinc finger domain-containing protein 3 (587 aa).

Low complexity predominate over residues 53–74; the sequence is NINNNINNNNNNNNNNNNNNIN. Disordered regions lie at residues 53 to 141, 179 to 294, and 312 to 392; these read NINN…LKIP, QLAH…SSPS, and QTSP…ATIN. Residues 75 to 86 show a composition bias toward polar residues; that stretch reads QYHQNHYDQYSD. Composition is skewed to low complexity over residues 87-136, 183-202, 237-264, 272-292, and 316-333; these read NNCN…NNNN, NSSMPNSPTSSNISPSTPTS, NINGNHHNNNNNINNNINNNVNNNINNG, GNNNNNNNIGVNGSGSSNSSS, and SQQSQQQQQQQQQQQQSQ. 2 stretches are compositionally biased toward polar residues: residues 340 to 358 and 365 to 379; these read INTTEIHQRSNPSSATNSP and NESSVENSPFTTPLS. The GATA-type zinc-finger motif lies at 500–525; sequence CIFCGTMETPEWRKGPGGHKTLCNAC. The segment at 536–587 is disordered; it reads ENQNNGGSPNPQQNNVTTTTTTTTSTSTNSPNSNGNNFSPESAMSVSKLISD. A compositionally biased stretch (low complexity) spans 538–575; it reads QNNGGSPNPQQNNVTTTTTTTTSTSTNSPNSNGNNFSP. Positions 577-587 are enriched in polar residues; it reads SAMSVSKLISD.

This Dictyostelium discoideum (Social amoeba) protein is GATA zinc finger domain-containing protein 3 (gtaC).